Here is a 249-residue protein sequence, read N- to C-terminus: Small ribosomal subunit protein eS6 (249 aa).

The segment covering 216–229 (RMKEAKEKRQEQIA) has biased composition (basic and acidic residues). The tract at residues 216–249 (RMKEAKEKRQEQIAKRRRLSSLRASTSKSESSQK) is disordered. A phosphoserine mark is found at Ser235, Ser236, Ser240, Ser244, and Ser247. The span at 236-249 (SLRASTSKSESSQK) shows a compositional bias: low complexity.

This sequence belongs to the eukaryotic ribosomal protein eS6 family. As to quaternary structure, component of the small ribosomal subunit. In terms of processing, ribosomal protein S6 is the major substrate of protein kinases in eukaryote ribosomes. The phosphorylation is stimulated by growth factors, tumor promoting agents, and mitogens. It is dephosphorylated at growth arrest.

The protein resides in the cytoplasm. Component of the 40S small ribosomal subunit. Plays an important role in controlling cell growth and proliferation through the selective translation of particular classes of mRNA. This chain is Small ribosomal subunit protein eS6 (rps6), found in Oncorhynchus mykiss (Rainbow trout).